Reading from the N-terminus, the 485-residue chain is Glutamyl-tRNA(Gln) amidotransferase subunit A (485 aa).

Catalysis depends on charge relay system residues Lys79 and Ser154. Ser178 (acyl-ester intermediate) is an active-site residue.

This sequence belongs to the amidase family. GatA subfamily. As to quaternary structure, heterotrimer of A, B and C subunits.

It carries out the reaction L-glutamyl-tRNA(Gln) + L-glutamine + ATP + H2O = L-glutaminyl-tRNA(Gln) + L-glutamate + ADP + phosphate + H(+). In terms of biological role, allows the formation of correctly charged Gln-tRNA(Gln) through the transamidation of misacylated Glu-tRNA(Gln) in organisms which lack glutaminyl-tRNA synthetase. The reaction takes place in the presence of glutamine and ATP through an activated gamma-phospho-Glu-tRNA(Gln). The polypeptide is Glutamyl-tRNA(Gln) amidotransferase subunit A (Bacillus licheniformis (strain ATCC 14580 / DSM 13 / JCM 2505 / CCUG 7422 / NBRC 12200 / NCIMB 9375 / NCTC 10341 / NRRL NRS-1264 / Gibson 46)).